Consider the following 690-residue polypeptide: Protein arginine N-methyltransferase 7 (690 aa).

SAM-dependent MTase PRMT-type domains follow at residues 14–357 and 366–690; these read ENSW…YSLW and AKSV…QKKP.

This sequence belongs to the class I-like SAM-binding methyltransferase superfamily. Protein arginine N-methyltransferase family. PRMT7 subfamily.

Functionally, essential arginine methyltransferase that can both catalyze the formation of omega-N monomethylarginine (MMA) and symmetrical dimethylarginine (sDMA). Specifically mediates the symmetrical dimethylation of arginine residues in the small nuclear ribonucleoproteins SmD1 and SmD3. This chain is Protein arginine N-methyltransferase 7 (Art7), found in Drosophila ananassae (Fruit fly).